Consider the following 550-residue polypeptide: Glutamyl-tRNA(Gln) amidotransferase subunit A, mitochondrial (550 aa).

Active-site charge relay system residues include lysine 79 and serine 171. Serine 195 serves as the catalytic Acyl-ester intermediate. Positions 371–390 (EKDENKVDNDNDDDDDVDEN) are disordered.

The protein belongs to the amidase family. GatA subfamily. In terms of assembly, subunit of the heterotrimeric GatCAB amidotransferase (AdT) complex, composed of A, B and C subunits.

It is found in the mitochondrion. The catalysed reaction is L-glutamyl-tRNA(Gln) + L-glutamine + ATP + H2O = L-glutaminyl-tRNA(Gln) + L-glutamate + ADP + phosphate + H(+). Functionally, allows the formation of correctly charged Gln-tRNA(Gln) through the transamidation of misacylated Glu-tRNA(Gln) in the mitochondria. The reaction takes place in the presence of glutamine and ATP through an activated gamma-phospho-Glu-tRNA(Gln). The sequence is that of Glutamyl-tRNA(Gln) amidotransferase subunit A, mitochondrial from Dictyostelium discoideum (Social amoeba).